Reading from the N-terminus, the 307-residue chain is Porphobilinogen deaminase (307 aa).

C239 is subject to S-(dipyrrolylmethanemethyl)cysteine.

Belongs to the HMBS family. In terms of assembly, monomer. Dipyrromethane is required as a cofactor.

It catalyses the reaction 4 porphobilinogen + H2O = hydroxymethylbilane + 4 NH4(+). It functions in the pathway porphyrin-containing compound metabolism; protoporphyrin-IX biosynthesis; coproporphyrinogen-III from 5-aminolevulinate: step 2/4. Its function is as follows. Tetrapolymerization of the monopyrrole PBG into the hydroxymethylbilane pre-uroporphyrinogen in several discrete steps. The polypeptide is Porphobilinogen deaminase (Campylobacter jejuni subsp. jejuni serotype O:23/36 (strain 81-176)).